The following is a 215-amino-acid chain: MADIRVKICGMKTRADMEAAAAAGAAYVGLNFYAKSARSVTIAQAAALASDAPVGLAKVGLVVNPTDADLDAITGSVPLDMIQLHGQESVERVAEIKTRYGLPVMKVIGVAEAADLDPIDLYAQVADQLMVDAKAPKGAKLPGGNGISFDWQLLASKKYWQAPWMLAGGLTPENVAEAIRKTGARQVDVASGVESAPAQKDPDLMRAFVEAAQAV.

It belongs to the TrpF family.

It carries out the reaction N-(5-phospho-beta-D-ribosyl)anthranilate = 1-(2-carboxyphenylamino)-1-deoxy-D-ribulose 5-phosphate. It functions in the pathway amino-acid biosynthesis; L-tryptophan biosynthesis; L-tryptophan from chorismate: step 3/5. The sequence is that of N-(5'-phosphoribosyl)anthranilate isomerase from Ruegeria sp. (strain TM1040) (Silicibacter sp.).